We begin with the raw amino-acid sequence, 462 residues long: Argininosuccinate lyase (462 aa).

This sequence belongs to the lyase 1 family. Argininosuccinate lyase subfamily.

The protein resides in the cytoplasm. The enzyme catalyses 2-(N(omega)-L-arginino)succinate = fumarate + L-arginine. It participates in amino-acid biosynthesis; L-arginine biosynthesis; L-arginine from L-ornithine and carbamoyl phosphate: step 3/3. This chain is Argininosuccinate lyase, found in Chloroflexus aggregans (strain MD-66 / DSM 9485).